Reading from the N-terminus, the 232-residue chain is Enolase-phosphatase E1 (232 aa).

It belongs to the HAD-like hydrolase superfamily. MasA/MtnC family. In terms of assembly, monomer. It depends on Mg(2+) as a cofactor.

The enzyme catalyses 5-methylsulfanyl-2,3-dioxopentyl phosphate + H2O = 1,2-dihydroxy-5-(methylsulfanyl)pent-1-en-3-one + phosphate. Its pathway is amino-acid biosynthesis; L-methionine biosynthesis via salvage pathway; L-methionine from S-methyl-5-thio-alpha-D-ribose 1-phosphate: step 3/6. The protein operates within amino-acid biosynthesis; L-methionine biosynthesis via salvage pathway; L-methionine from S-methyl-5-thio-alpha-D-ribose 1-phosphate: step 4/6. In terms of biological role, bifunctional enzyme that catalyzes the enolization of 2,3-diketo-5-methylthiopentyl-1-phosphate (DK-MTP-1-P) into the intermediate 2-hydroxy-3-keto-5-methylthiopentenyl-1-phosphate (HK-MTPenyl-1-P), which is then dephosphorylated to form the acireductone 1,2-dihydroxy-3-keto-5-methylthiopentene (DHK-MTPene). In Xylella fastidiosa (strain M12), this protein is Enolase-phosphatase E1.